A 205-amino-acid chain; its full sequence is High frequency lysogenization protein HflD homolog (205 aa).

Belongs to the HflD family.

The protein resides in the cytoplasm. It is found in the cell inner membrane. The chain is High frequency lysogenization protein HflD homolog from Vibrio parahaemolyticus serotype O3:K6 (strain RIMD 2210633).